A 315-amino-acid polypeptide reads, in one-letter code: Aspartoacylase (315 aa).

Positions 23 and 26 each coordinate Zn(2+). Residues arginine 65 and 72–73 (NR) each bind substrate. Position 118 (histidine 118) interacts with Zn(2+). Substrate contacts are provided by residues 166-170 (YSTTR), glutamate 180, and tyrosine 290. Glutamate 180 is a catalytic residue.

The protein belongs to the AspA/AstE family. Aspartoacylase subfamily. Zn(2+) is required as a cofactor.

Its subcellular location is the cytoplasm. The protein resides in the nucleus. The enzyme catalyses an N-acyl-L-aspartate + H2O = a carboxylate + L-aspartate. Functionally, catalyzes the deacetylation of N-acetylaspartic acid (NAA) to produce acetate and L-aspartate. In Danio rerio (Zebrafish), this protein is Aspartoacylase (aspa).